Here is a 132-residue protein sequence, read N- to C-terminus: Homeobox protein HD-4 (132 aa).

Positions 29 to 88 (GLSGYRYKTHIQVYVLTKIFEITQYPSHDTRQNLAILLNMSPRTIQIWFQNSRSVSRGAA) form a DNA-binding region, homeobox. Residues 82–101 (SVSRGAAKKKVSKDNGPQEA) form a disordered region.

Its subcellular location is the nucleus. The chain is Homeobox protein HD-4 (HD-4) from Encephalitozoon cuniculi (strain GB-M1) (Microsporidian parasite).